The chain runs to 380 residues: Tryptophan 2,3-dioxygenase (380 aa).

Substrate-binding positions include 57-61 and arginine 128; that span reads FIITH. Histidine 313 is a heme binding site. Residue threonine 328 coordinates substrate.

It belongs to the tryptophan 2,3-dioxygenase family. In terms of assembly, homotetramer. Dimer of dimers. Heme serves as cofactor.

The enzyme catalyses L-tryptophan + O2 = N-formyl-L-kynurenine. It participates in amino-acid degradation; L-tryptophan degradation via kynurenine pathway; L-kynurenine from L-tryptophan: step 1/2. Its pathway is pigment biosynthesis; ommochrome biosynthesis. Heme-dependent dioxygenase that catalyzes the oxidative cleavage of the L-tryptophan (L-Trp) pyrrole ring and converts L-tryptophan to N-formyl-L-kynurenine. Catalyzes the oxidative cleavage of the indole moiety. This chain is Tryptophan 2,3-dioxygenase, found in Drosophila virilis (Fruit fly).